The sequence spans 292 residues: Undecaprenyl-diphosphatase (292 aa).

5 consecutive transmembrane segments (helical) span residues 87-107 (MGWY…LFEE), 113-133 (FRDL…LGMV), 190-210 (AFLL…KDIG), 219-239 (ATIV…AWFM), and 250-270 (FVYY…FGVL).

This sequence belongs to the UppP family.

It is found in the cell membrane. It catalyses the reaction di-trans,octa-cis-undecaprenyl diphosphate + H2O = di-trans,octa-cis-undecaprenyl phosphate + phosphate + H(+). In terms of biological role, catalyzes the dephosphorylation of undecaprenyl diphosphate (UPP). Confers resistance to bacitracin. This Thermobifida fusca (strain YX) protein is Undecaprenyl-diphosphatase.